We begin with the raw amino-acid sequence, 290 residues long: 1D-myo-inositol 2-acetamido-2-deoxy-alpha-D-glucopyranoside deacetylase (290 aa).

H17, D20, and H150 together coordinate Zn(2+).

It belongs to the MshB deacetylase family. Zn(2+) is required as a cofactor.

The catalysed reaction is 1D-myo-inositol 2-acetamido-2-deoxy-alpha-D-glucopyranoside + H2O = 1D-myo-inositol 2-amino-2-deoxy-alpha-D-glucopyranoside + acetate. In terms of biological role, catalyzes the deacetylation of 1D-myo-inositol 2-acetamido-2-deoxy-alpha-D-glucopyranoside (GlcNAc-Ins) in the mycothiol biosynthesis pathway. This is 1D-myo-inositol 2-acetamido-2-deoxy-alpha-D-glucopyranoside deacetylase from Corynebacterium glutamicum (strain R).